A 207-amino-acid polypeptide reads, in one-letter code: Flavin-dependent thymidylate synthase (207 aa).

The region spanning methionine 1–lysine 204 is the ThyX domain. FAD is bound by residues serine 50 and arginine 74–arginine 76. DUMP is bound by residues glutamate 71–arginine 74, serine 84–arginine 86, and lysine 143. Positions arginine 74–serine 84 match the ThyX motif motif. FAD is bound by residues asparagine 159–arginine 161 and asparagine 165. Arginine 170 is a binding site for dUMP. The active-site Involved in ionization of N3 of dUMP, leading to its activation is arginine 170.

Belongs to the thymidylate synthase ThyX family. As to quaternary structure, homotetramer. FAD serves as cofactor.

The enzyme catalyses dUMP + (6R)-5,10-methylene-5,6,7,8-tetrahydrofolate + NADPH + H(+) = dTMP + (6S)-5,6,7,8-tetrahydrofolate + NADP(+). Its pathway is pyrimidine metabolism; dTTP biosynthesis. In terms of biological role, catalyzes the reductive methylation of 2'-deoxyuridine-5'-monophosphate (dUMP) to 2'-deoxythymidine-5'-monophosphate (dTMP) while utilizing 5,10-methylenetetrahydrofolate (mTHF) as the methyl donor, and NADPH and FADH(2) as the reductant. In Campylobacter jejuni subsp. jejuni serotype O:2 (strain ATCC 700819 / NCTC 11168), this protein is Flavin-dependent thymidylate synthase.